We begin with the raw amino-acid sequence, 746 residues long: Ribosome biogenesis protein BOP1 (746 aa).

A disordered region spans residues Met-1 to Ala-116. The segment covering Ser-43–Asp-65 has biased composition (low complexity). Acidic residues predominate over residues Ser-66–Asp-87. Residues Asp-88–Glu-99 show a composition bias toward basic and acidic residues. Thr-106 is subject to Phosphothreonine. Tyr-122 is modified (phosphotyrosine). 2 positions are modified to phosphoserine: Ser-126 and Ser-127. The interval Met-265 to Trp-427 is sufficient for nucleolar localization. WD repeat units lie at residues Gly-411 to Thr-450, Pro-452 to Ala-492, Cys-532 to Arg-576, Arg-577 to Lys-615, Pro-618 to Arg-657, His-661 to Gln-700, and Thr-716 to Thr-746.

The protein belongs to the WD repeat BOP1/ERB1 family. In terms of assembly, component of the PeBoW complex, composed of BOP1, PES1 and WDR12. The complex is held together by BOP1, which interacts with PES1 via its N-terminal domain and with WDR12 via a high-affinity interaction between the seven-bladed beta-propeller domains of the 2 proteins. The NOP7 complex associates with the 66S pre-ribosome. The PeBoW complex associates with DDX27, BOP1 interacts directly with DDX27.

It localises to the nucleus. The protein localises to the nucleolus. The protein resides in the nucleoplasm. In terms of biological role, component of the PeBoW complex, which is required for maturation of 28S and 5.8S ribosomal RNAs and formation of the 60S ribosome. The protein is Ribosome biogenesis protein BOP1 of Homo sapiens (Human).